Reading from the N-terminus, the 83-residue chain is Alpha-conotoxin QcIA (83 aa).

Positions 1–21 are cleaved as a signal peptide; it reads MGMRMMFTLFLLAVLSTTVVS. A propeptide spanning residues 22–48 is cleaved from the precursor; sequence FTLDRASNGRDAAADSKAADQIAQTVR. Intrachain disulfides connect Cys51–Cys57 and Cys52–Cys65. The interval 53-55 is ser-Xaa-Pro motif, crucial for potent interaction with nAChR; that stretch reads SNP. A propeptide spanning residues 66–83 is cleaved from the precursor; that stretch reads RRTLMLQNPLNHDMSPSA.

It belongs to the conotoxin A superfamily. As to expression, expressed by the venom duct.

The protein resides in the secreted. Its function is as follows. Alpha-conotoxins bind to the nicotinic acetylcholine receptors (nAChR) and inhibit them. A synthetic amidated version of this toxin potently and preferentially antagonizes neuronal rat alpha-3-beta-2 (IC(50)=55.7 nM) and alpha-6/alpha-3-beta-4 (IC(50)=90.69 nM) nAChRs. This Conus quercinus (Oak cone) protein is Alpha-conotoxin QcIA.